Here is a 715-residue protein sequence, read N- to C-terminus: Probable GTP diphosphokinase RSH3, chloroplastic (715 aa).

The N-terminal 64 residues, 1–64 (MVVATTIALY…LLFSGASVKS (64 aa)), are a transit peptide targeting the chloroplast. Positions 65–74 (SSSSSSSHPS) are enriched in low complexity. A disordered region spans residues 65-84 (SSSSSSSHPSVGEELASIRH). In terms of domain architecture, HD spans 237 to 341 (YLQHCVETAM…IKLADRLHNM (105 aa)).

This sequence belongs to the RelA/SpoT family. As to expression, expressed in roots, hypocotyls, shoots, cotyledons, rosette and cauline leaves, stems, petals, sepals, stamens, pistils and siliques.

The protein localises to the plastid. The protein resides in the chloroplast. The enzyme catalyses GTP + ATP = guanosine 3'-diphosphate 5'-triphosphate + AMP. Its function is as follows. Possesses ppGpp (guanosine 3'-diphosphate 5'-diphosphate) synthetase activity in vitro and is able to functionally complement E.coli relA mutants. May be involved in a rapid plant ppGpp-mediated response to pathogens and other stresses. This chain is Probable GTP diphosphokinase RSH3, chloroplastic (RSH3), found in Arabidopsis thaliana (Mouse-ear cress).